A 365-amino-acid polypeptide reads, in one-letter code: Chorismate synthase (365 aa).

Arg46 contacts NADP(+). FMN is bound by residues 123–125 (RSS), 241–242 (NG), Gly281, 296–300 (KPTPS), and Arg322.

This sequence belongs to the chorismate synthase family. As to quaternary structure, homotetramer. It depends on FMNH2 as a cofactor.

The catalysed reaction is 5-O-(1-carboxyvinyl)-3-phosphoshikimate = chorismate + phosphate. It participates in metabolic intermediate biosynthesis; chorismate biosynthesis; chorismate from D-erythrose 4-phosphate and phosphoenolpyruvate: step 7/7. Functionally, catalyzes the anti-1,4-elimination of the C-3 phosphate and the C-6 proR hydrogen from 5-enolpyruvylshikimate-3-phosphate (EPSP) to yield chorismate, which is the branch point compound that serves as the starting substrate for the three terminal pathways of aromatic amino acid biosynthesis. This reaction introduces a second double bond into the aromatic ring system. This is Chorismate synthase from Helicobacter pylori (strain HPAG1).